A 933-amino-acid polypeptide reads, in one-letter code: Bifunctional uridylyltransferase/uridylyl-removing enzyme (933 aa).

Residues 1 to 390 (MLSTRAASAD…RLAALARRKD (390 aa)) form a uridylyltransferase region. The interval 391–745 (VDGFVVDGER…TRIDRGRAIT (355 aa)) is uridylyl-removing. The region spanning 506-628 (VDEHTLFALG…VQSPERLRLL (123 aa)) is the HD domain. 2 ACT domains span residues 746–829 (EVTI…DLTK) and 859–933 (VIEV…DPSA).

Belongs to the GlnD family. Mg(2+) serves as cofactor.

It catalyses the reaction [protein-PII]-L-tyrosine + UTP = [protein-PII]-uridylyl-L-tyrosine + diphosphate. The enzyme catalyses [protein-PII]-uridylyl-L-tyrosine + H2O = [protein-PII]-L-tyrosine + UMP + H(+). With respect to regulation, uridylyltransferase (UTase) activity is inhibited by glutamine, while glutamine activates uridylyl-removing (UR) activity. Uridylylation process is dependent on ATP and 2-oxoglutarate, which are effector molecules that likely bind to PII proteins and control their activity. Functionally, modifies, by uridylylation and deuridylylation, the PII regulatory proteins GlnB and GlnZ, in response to the nitrogen status of the cell that GlnD senses through the glutamine level. Under low glutamine levels, catalyzes the conversion of the PII proteins and UTP to PII-UMP and PPi, while under higher glutamine levels, GlnD hydrolyzes PII-UMP to PII and UMP (deuridylylation). Thus, controls uridylylation state and activity of the PII proteins, and plays an important role in the regulation of nitrogen fixation and metabolism. The protein is Bifunctional uridylyltransferase/uridylyl-removing enzyme of Azospirillum brasilense.